Here is a 384-residue protein sequence, read N- to C-terminus: Iron(3+)-hydroxamate import system permease protein FhuB (384 aa).

The next 9 helical transmembrane spans lie at 58–78 (GAVI…FLSI), 115–135 (TAAA…MQGM), 154–174 (FAVS…LVLW), 176–196 (FAGA…SRGG), 202–222 (LALA…AIAI), 243–263 (WSGV…AFFI), 296–316 (VILT…GLII), 330–350 (WIIP…DIAA), and 357–377 (FETP…FYLA).

It belongs to the binding-protein-dependent transport system permease family. FecCD subfamily. In terms of assembly, the complex is composed of an ATP-binding protein (FhuC), two transmembrane proteins (FhuB and FhuG) and a solute-binding protein (FhuD or YxeB).

It localises to the cell membrane. The protein localises to the membrane raft. Functionally, part of the ABC transporter complex FhuBGCD involved in iron(3+)-hydroxamate import. Responsible for the translocation of the substrate across the membrane. This is Iron(3+)-hydroxamate import system permease protein FhuB (fhuB) from Bacillus subtilis (strain 168).